The primary structure comprises 311 residues: Ribosomal RNA small subunit methyltransferase H (311 aa).

S-adenosyl-L-methionine-binding positions include 32-34 (AGH), D52, F79, D100, and Q107. Over residues 289–298 (SKEELEENNR) the composition is skewed to basic and acidic residues. A disordered region spans residues 289-311 (SKEELEENNRARSAKLRIAEKRK). The segment covering 300–311 (RSAKLRIAEKRK) has biased composition (basic residues).

It belongs to the methyltransferase superfamily. RsmH family.

The protein resides in the cytoplasm. The enzyme catalyses cytidine(1402) in 16S rRNA + S-adenosyl-L-methionine = N(4)-methylcytidine(1402) in 16S rRNA + S-adenosyl-L-homocysteine + H(+). In terms of biological role, specifically methylates the N4 position of cytidine in position 1402 (C1402) of 16S rRNA. In Bacillus velezensis (strain DSM 23117 / BGSC 10A6 / LMG 26770 / FZB42) (Bacillus amyloliquefaciens subsp. plantarum), this protein is Ribosomal RNA small subunit methyltransferase H.